Reading from the N-terminus, the 260-residue chain is MFEINVDPVAFSIGSLVVKWYGIMMALGVVALVSWIFWRIKRGANISYDTVLTAAIIAIPSGIVFAKLLHVIDAWEYYSLNPGAIFSGEGLTIFGAIIGATIGLWIYSRYSHFNLGYLLDVAVPGILLGQAIGRVGCLLNGCCYGEFGGTGCSVIYTNPATAAPYGVEVAPTQAYEIIFLLCLLTFSLFIAKKLRPDGQLFLLYISLYAAWRVAIGFVRVNDDFALGLEQAQVVGLILMAVAVPLFIYRLRKQKQTDKIT.

4 helical membrane-spanning segments follow: residues valine 17–phenylalanine 37, leucine 52–isoleucine 72, isoleucine 85–tryptophan 105, and phenylalanine 113–glycine 133. Residue arginine 134 coordinates a 1,2-diacyl-sn-glycero-3-phospho-(1'-sn-glycerol). 3 consecutive transmembrane segments (helical) span residues alanine 170 to isoleucine 190, glycine 198 to valine 218, and glycine 227 to isoleucine 247.

This sequence belongs to the Lgt family.

Its subcellular location is the cell membrane. The catalysed reaction is L-cysteinyl-[prolipoprotein] + a 1,2-diacyl-sn-glycero-3-phospho-(1'-sn-glycerol) = an S-1,2-diacyl-sn-glyceryl-L-cysteinyl-[prolipoprotein] + sn-glycerol 1-phosphate + H(+). It functions in the pathway protein modification; lipoprotein biosynthesis (diacylglyceryl transfer). Its function is as follows. Catalyzes the transfer of the diacylglyceryl group from phosphatidylglycerol to the sulfhydryl group of the N-terminal cysteine of a prolipoprotein, the first step in the formation of mature lipoproteins. The polypeptide is Phosphatidylglycerol--prolipoprotein diacylglyceryl transferase (Dehalococcoides mccartyi (strain ATCC BAA-2100 / JCM 16839 / KCTC 5957 / BAV1)).